The following is an 88-amino-acid chain: Cuticle protein 70, isoforms A and B (88 aa).

A run of 5 repeats spans residues A7–A10, A48–A51, A55–P58, A60–V63, and A66–V69.

In terms of biological role, component of the cuticle of migratory locust which contains more than 100 different structural proteins. The chain is Cuticle protein 70, isoforms A and B from Locusta migratoria (Migratory locust).